A 339-amino-acid polypeptide reads, in one-letter code: Ketol-acid reductoisomerase (NADP(+)) (339 aa).

In terms of domain architecture, KARI N-terminal Rossmann spans 1–182 (MRVYYDRDAD…GGGRSGVIET (182 aa)). Residues 24 to 27 (YGSQ), R48, S51, T53, and 83 to 86 (DELQ) each bind NADP(+). The active site involves H108. Position 134 (G134) interacts with NADP(+). Positions 183-328 (NFREECETDL…GRLRAMMPWI (146 aa)) constitute a KARI C-terminal knotted domain. 4 residues coordinate Mg(2+): D191, E195, E227, and E231. S252 provides a ligand contact to substrate.

This sequence belongs to the ketol-acid reductoisomerase family. It depends on Mg(2+) as a cofactor.

It carries out the reaction (2R)-2,3-dihydroxy-3-methylbutanoate + NADP(+) = (2S)-2-acetolactate + NADPH + H(+). The catalysed reaction is (2R,3R)-2,3-dihydroxy-3-methylpentanoate + NADP(+) = (S)-2-ethyl-2-hydroxy-3-oxobutanoate + NADPH + H(+). It participates in amino-acid biosynthesis; L-isoleucine biosynthesis; L-isoleucine from 2-oxobutanoate: step 2/4. The protein operates within amino-acid biosynthesis; L-valine biosynthesis; L-valine from pyruvate: step 2/4. Its function is as follows. Involved in the biosynthesis of branched-chain amino acids (BCAA). Catalyzes an alkyl-migration followed by a ketol-acid reduction of (S)-2-acetolactate (S2AL) to yield (R)-2,3-dihydroxy-isovalerate. In the isomerase reaction, S2AL is rearranged via a Mg-dependent methyl migration to produce 3-hydroxy-3-methyl-2-ketobutyrate (HMKB). In the reductase reaction, this 2-ketoacid undergoes a metal-dependent reduction by NADPH to yield (R)-2,3-dihydroxy-isovalerate. The chain is Ketol-acid reductoisomerase (NADP(+)) from Phenylobacterium zucineum (strain HLK1).